Consider the following 307-residue polypeptide: ATP-dependent (S)-NAD(P)H-hydrate dehydratase (307 aa).

One can recognise a YjeF C-terminal domain in the interval 1-291 (MDHFIKLLPK…DEIPKLVRDV (291 aa)). Residues G96 and 150–156 (NIVEFSR) each bind (6S)-NADPHX. Residues 194-198 (KGEVD) and 214-223 (SSLRRCGGQG) each bind ATP. D224 lines the (6S)-NADPHX pocket.

The protein belongs to the NnrD/CARKD family. Mg(2+) serves as cofactor.

The enzyme catalyses (6S)-NADHX + ATP = ADP + phosphate + NADH + H(+). It carries out the reaction (6S)-NADPHX + ATP = ADP + phosphate + NADPH + H(+). In terms of biological role, catalyzes the dehydration of the S-form of NAD(P)HX at the expense of ATP, which is converted to ADP. Together with NAD(P)HX epimerase, which catalyzes the epimerization of the S- and R-forms, the enzyme allows the repair of both epimers of NAD(P)HX, a damaged form of NAD(P)H that is a result of enzymatic or heat-dependent hydration. The protein is ATP-dependent (S)-NAD(P)H-hydrate dehydratase of Caenorhabditis elegans.